Here is a 156-residue protein sequence, read N- to C-terminus: Peptide methionine sulfoxide reductase MsrA (156 aa).

The active site involves C10.

This sequence belongs to the MsrA Met sulfoxide reductase family.

The enzyme catalyses L-methionyl-[protein] + [thioredoxin]-disulfide + H2O = L-methionyl-(S)-S-oxide-[protein] + [thioredoxin]-dithiol. It carries out the reaction [thioredoxin]-disulfide + L-methionine + H2O = L-methionine (S)-S-oxide + [thioredoxin]-dithiol. Its function is as follows. Has an important function as a repair enzyme for proteins that have been inactivated by oxidation. Catalyzes the reversible oxidation-reduction of methionine sulfoxide in proteins to methionine. This chain is Peptide methionine sulfoxide reductase MsrA, found in Metamycoplasma arthritidis (strain 158L3-1) (Mycoplasma arthritidis).